A 118-amino-acid chain; its full sequence is Large ribosomal subunit protein bL19 (118 aa).

The protein belongs to the bacterial ribosomal protein bL19 family.

This protein is located at the 30S-50S ribosomal subunit interface and may play a role in the structure and function of the aminoacyl-tRNA binding site. This is Large ribosomal subunit protein bL19 from Helicobacter pylori (strain G27).